The chain runs to 78 residues: Non-structural protein 7 (78 aa).

Residues 1–23 (MLVLLHAVFITVLTLLLLGRLQL) form the signal peptide. Topologically, residues 24 to 57 (LERLLLNHSFNLKTVADFNILYRSLAETRLLKVV) are lumenal. The segment at 54-65 (LKVVLRLIFLVL) is interaction with PPP1CC/PP1-gamma. The helical transmembrane segment at 58 to 78 (LRLIFLVLLGFCCYRLLVILM) threads the bilayer.

It belongs to the coronaviruses ns7/ns7a protein family. As to quaternary structure, interacts with serine/threonine-protein phosphatase PPP1CC/PP1-gamma; this interaction; this interaction probably promotes EIF2S1/eIF-2alpha dephosphorylation.

The protein resides in the host membrane. Inhibits the integrated stress response (ISR) in the infected cell by promoting EIF2S1/eIF-2alpha dephosphorylation. Acts as a functional homolog of host PPP1R15A/GADD34 to recruit PP1 phosphatase and dephosphorylate host EIF2S1/eIF-2alpha. May function in the formation of membrane-bound replication complexes or in the assembly of the virus. In Sus scrofa (Pig), this protein is Non-structural protein 7.